We begin with the raw amino-acid sequence, 185 residues long: UPF0397 protein CPF_1836 (185 aa).

Helical transmembrane passes span 11-31 (IVAI…GSLP), 44-64 (AFLA…IGFI), 71-91 (IVFF…VGLI), 111-131 (IFMF…LVAP), and 149-169 (GVIG…ILIA).

Belongs to the UPF0397 family.

The protein resides in the cell membrane. This is UPF0397 protein CPF_1836 from Clostridium perfringens (strain ATCC 13124 / DSM 756 / JCM 1290 / NCIMB 6125 / NCTC 8237 / Type A).